The primary structure comprises 1482 residues: Cystic fibrosis transmembrane conductance regulator (1482 aa).

The Cytoplasmic portion of the chain corresponds to Met1 to Phe77. The helical transmembrane segment at Phe78–Gln98 threads the bilayer. The region spanning Phe81–Leu365 is the ABC transmembrane type-1 1 domain. The Extracellular segment spans residues Pro99–Tyr122. A helical membrane pass occupies residues Leu123–His146. The Cytoplasmic portion of the chain corresponds to His147–Leu195. Residues Ala196–Trp216 form a helical membrane-spanning segment. The Extracellular portion of the chain corresponds to Asp217–Ser222. The helical transmembrane segment at Ala223 to Met243 threads the bilayer. Topologically, residues Met244–Lys298 are cytoplasmic. Residues Ala299–Phe319 traverse the membrane as a helical segment. Residues Leu320–Thr339 lie on the Extracellular side of the membrane. Residues Ile340–Val358 form a helical membrane-spanning segment. Topologically, residues Gln359–Arg859 are cytoplasmic. Residues Trp401, Ser434, Gly458–Thr465, and Gln493 each bind ATP. In terms of domain architecture, ABC transporter 1 spans Asn423 to Gly646. Cys524 carries the S-palmitoyl cysteine lipid modification. A phosphoserine mark is found at Ser549 and Ser660. The disordered R region stretch occupies residues Ser654–Glu832. Ser670 is subject to Phosphoserine; by PKA. A Phosphoserine modification is found at Ser686. Lys688 is covalently cross-linked (Glycyl lysine isopeptide (Lys-Gly) (interchain with G-Cter in ubiquitin)). Phosphoserine is present on residues Ser700 and Ser712. Residue Thr717 is modified to Phosphothreonine. 4 positions are modified to phosphoserine: Ser737, Ser768, Ser796, and Ser814. The helical transmembrane segment at Leu860–Val880 threads the bilayer. The 297-residue stretch at Leu860 to Ser1156 folds into the ABC transmembrane type-1 2 domain. Residues Leu881–Ile919 lie on the Extracellular side of the membrane. Asn895 and Asn901 each carry an N-linked (GlcNAc...) asparagine glycan. The discontinuously helical transmembrane segment at Tyr920–His940 threads the bilayer. At Thr941–Thr991 the chain is on the cytoplasmic side. A helical transmembrane segment spans residues Ile992–Leu1012. At Lys1013–Pro1014 the chain is on the extracellular side. Residues Tyr1015 to Leu1035 form a helical membrane-spanning segment. Residues His1036 to Thr1096 lie on the Cytoplasmic side of the membrane. Residues Leu1097–Phe1117 traverse the membrane as a helical segment. Over Ile1118–Gly1131 the chain is Extracellular. The helical transmembrane segment at Ile1132–Ile1152 threads the bilayer. The Cytoplasmic portion of the chain corresponds to Asp1153–Leu1482. In terms of domain architecture, ABC transporter 2 spans Met1212–Pro1445. ATP is bound by residues Tyr1221 and Gly1246 to Ser1253. The tract at residues Arg1388–Leu1482 is interaction with GORASP2. Cys1397 carries S-palmitoyl cysteine lipidation. The residue at position 1446 (Ser1446) is a Phosphoserine. The interval Lys1450–Leu1482 is disordered. Residues Glu1472 to Leu1482 show a composition bias toward acidic residues. The short motif at Thr1480–Leu1482 is the PDZ-binding element.

This sequence belongs to the ABC transporter superfamily. ABCC family. CFTR transporter (TC 3.A.1.202) subfamily. As to quaternary structure, monomer; does not require oligomerization for channel activity. May form oligomers in the membrane. Interacts with SLC26A3, SLC26A6 and NHERF1. Interacts with SHANK2. Interacts with MYO6. Interacts (via C-terminus) with GOPC (via PDZ domain); this promotes CFTR internalization and thereby decreases channel activity. Interacts with SLC4A7 through NHERF1. Found in a complex with MYO5B and RAB11A. Interacts with ANO1. Interacts with SLC26A8. Interacts with AHCYL1; the interaction increases CFTR activity. Interacts with CSE1L. The core-glycosylated form interacts with GORASP2 (via PDZ GRASP-type 1 domain) in respone to ER stress. Interacts with MARCHF2; the interaction leads to CFTR ubiqtuitination and degradation. Interacts with ADGRG2. In terms of processing, N-glycosylated. Post-translationally, phosphorylated; cAMP treatment promotes phosphorylation and activates the channel. Dephosphorylation decreases the ATPase activity (in vitro). Phosphorylation at PKA sites activates the channel. Phosphorylation at PKC sites enhances the response to phosphorylation by PKA. Phosphorylated by AMPK; this inhibits channel activity. Ubiquitinated, leading to its degradation in the lysosome. Deubiquitination by USP10 in early endosomes enhances its endocytic recycling to the cell membrane. Ubiquitinated by RNF185 during ER stress. Ubiquitinated by MARCHF2.

The protein resides in the apical cell membrane. It is found in the early endosome membrane. The protein localises to the cell membrane. Its subcellular location is the recycling endosome membrane. It localises to the endoplasmic reticulum membrane. The protein resides in the nucleus. It catalyses the reaction ATP + H2O + closed Cl(-) channel = ADP + phosphate + open Cl(-) channel.. The catalysed reaction is chloride(in) = chloride(out). It carries out the reaction hydrogencarbonate(in) = hydrogencarbonate(out). The enzyme catalyses ATP + H2O = ADP + phosphate + H(+). Functionally, epithelial ion channel that plays an important role in the regulation of epithelial ion and water transport and fluid homeostasis. Mediates the transport of chloride ions across the cell membrane. Possesses an intrinsic ATPase activity and utilizes ATP to gate its channel; the passive flow of anions through the channel is gated by cycles of ATP binding and hydrolysis by the ATP-binding domains. The ion channel is also permeable to HCO(3)(-); selectivity depends on the extracellular chloride concentration. Exerts its function also by modulating the activity of other ion channels and transporters. Contributes to the regulation of the pH and the ion content of the epithelial fluid layer. Modulates the activity of the epithelial sodium channel (ENaC) complex, in part by regulating the cell surface expression of the ENaC complex. May regulate bicarbonate secretion and salvage in epithelial cells by regulating the transporter SLC4A7. Can inhibit the chloride channel activity of ANO1. Plays a role in the chloride and bicarbonate homeostasis during sperm epididymal maturation and capacitation. The polypeptide is Cystic fibrosis transmembrane conductance regulator (Dasypus novemcinctus (Nine-banded armadillo)).